Reading from the N-terminus, the 398-residue chain is Elongation factor Tu (398 aa).

The region spanning 10–208 is the tr-type G domain; the sequence is KPHVNVGTIG…ALDSHIPEPT (199 aa). A G1 region spans residues 19-26; sequence GHIDHGKT. 19–26 lines the GTP pocket; it reads GHIDHGKT. Residue threonine 26 participates in Mg(2+) binding. Residues 60–64 form a G2 region; the sequence is TKTVT. Positions 83 to 86 are G3; that stretch reads DCPG. Residues 83–87 and 138–141 contribute to the GTP site; these read DCPGH and NKCD. Residues 138 to 141 are G4; sequence NKCD. The G5 stretch occupies residues 176 to 178; the sequence is SSL.

The protein belongs to the TRAFAC class translation factor GTPase superfamily. Classic translation factor GTPase family. EF-Tu/EF-1A subfamily. As to quaternary structure, monomer.

It is found in the cytoplasm. It catalyses the reaction GTP + H2O = GDP + phosphate + H(+). Functionally, GTP hydrolase that promotes the GTP-dependent binding of aminoacyl-tRNA to the A-site of ribosomes during protein biosynthesis. The polypeptide is Elongation factor Tu (Rhodopirellula baltica (strain DSM 10527 / NCIMB 13988 / SH1)).